The chain runs to 395 residues: Glyceraldehyde-3-phosphate dehydrogenase, testis-specific (395 aa).

Positions 1–60 (MSKRDIVLTNVTVVQLLRQPCPEPRVEAEPEPPAQPQPQPEPIKEEVPPPPPPPPAPKKV) are testis-specific N-terminal extension. Residues 19-59 (QPCPEPRVEAEPEPPAQPQPQPEPIKEEVPPPPPPPPAPKK) are disordered. Pro residues-rich tracts occupy residues 31–41 (EPPAQPQPQPE) and 48–57 (PPPPPPPPAP). NAD(+) contacts are provided by residues 72–73 (RI), Asp-93, and Lys-138. D-glyceraldehyde 3-phosphate contacts are provided by residues 210–212 (SCT), Thr-241, 270–271 (TG), and Arg-293. Cys-211 acts as the Nucleophile in catalysis. Asn-375 contributes to the NAD(+) binding site.

This sequence belongs to the glyceraldehyde-3-phosphate dehydrogenase family. Homotetramer.

It is found in the cytoplasm. It carries out the reaction D-glyceraldehyde 3-phosphate + phosphate + NAD(+) = (2R)-3-phospho-glyceroyl phosphate + NADH + H(+). It functions in the pathway carbohydrate degradation; glycolysis; pyruvate from D-glyceraldehyde 3-phosphate: step 1/5. May play an important role in regulating the switch between different pathways for energy production during spermiogenesis and in the spermatozoon. Required for sperm motility and male fertility. This is Glyceraldehyde-3-phosphate dehydrogenase, testis-specific (GAPDHS) from Bos taurus (Bovine).